The chain runs to 786 residues: uncharacterized protein (786 aa).

Substrate is bound at residue 361–362; that stretch reads WD. The active-site Proton donor is Glu488. 590 to 591 provides a ligand contact to substrate; that stretch reads KQ. The tract at residues 762–786 is disordered; that stretch reads TRKPLLPPPPQPPGREPVHRRALAR. Pro residues predominate over residues 766 to 776; the sequence is LLPPPPQPPGR.

It belongs to the glycosyl hydrolase 65 family.

This is an uncharacterized protein from Mycobacterium tuberculosis (strain CDC 1551 / Oshkosh).